The primary structure comprises 270 residues: Probable septum site-determining protein MinC (270 aa).

Belongs to the MinC family. Interacts with MinD and FtsZ.

Cell division inhibitor that blocks the formation of polar Z ring septums. Rapidly oscillates between the poles of the cell to destabilize FtsZ filaments that have formed before they mature into polar Z rings. Prevents FtsZ polymerization. In Cupriavidus necator (strain ATCC 17699 / DSM 428 / KCTC 22496 / NCIMB 10442 / H16 / Stanier 337) (Ralstonia eutropha), this protein is Probable septum site-determining protein MinC.